The sequence spans 222 residues: MATIEVKDREGAAKGSVELPDEIFAQKVNIPLIHQVVVAQQAAGRQGTHSTKTRGEVRGGGKKPYRQKGTGRARQGSVRAPQFTGGGTVHGPKPRDYAQRTPKKMKAAALRGALSNRAQHGRIHVVSEFVPEDVTTKRTQTALKTLRKITDSDKVLVVLSREDQHNRLALRNLPEVHILDANQVNTYDVLYADDIVFTEAGYQEFLAHAKGSKIAASQEDDQ.

Residues 42 to 100 (AAGRQGTHSTKTRGEVRGGGKKPYRQKGTGRARQGSVRAPQFTGGGTVHGPKPRDYAQR) form a disordered region. Residues 60 to 71 (GGKKPYRQKGTG) show a composition bias toward basic residues.

It belongs to the universal ribosomal protein uL4 family. In terms of assembly, part of the 50S ribosomal subunit.

Functionally, one of the primary rRNA binding proteins, this protein initially binds near the 5'-end of the 23S rRNA. It is important during the early stages of 50S assembly. It makes multiple contacts with different domains of the 23S rRNA in the assembled 50S subunit and ribosome. In terms of biological role, forms part of the polypeptide exit tunnel. The sequence is that of Large ribosomal subunit protein uL4 from Thermobifida fusca (strain YX).